We begin with the raw amino-acid sequence, 163 residues long: uncharacterized protein (163 aa).

Residues 7–23 traverse the membrane as a helical segment; the sequence is TLVAFIATFFNLAATSI.

It is found in the membrane. This is an uncharacterized protein from Saccharomyces cerevisiae (strain ATCC 204508 / S288c) (Baker's yeast).